Here is a 360-residue protein sequence, read N- to C-terminus: Metalloendoproteinase 5-MMP (360 aa).

The first 20 residues, 1-20, serve as a signal peptide directing secretion; that stretch reads MRTLLLTILIFFFTVNPISA. A propeptide spans 21 to 142 (activation peptide); the sequence is KFYTNVSSIP…GGKILRTTEK (122 aa). Asparagine 25, asparagine 36, and asparagine 78 each carry an N-linked (GlcNAc...) asparagine glycan. A Cysteine switch motif is present at residues 117-124; the sequence is PRCGNPDL. Position 119 (cysteine 119) interacts with Zn(2+). N-linked (GlcNAc...) asparagine glycosylation is found at asparagine 168 and asparagine 191. Histidine 270 contacts Zn(2+). Residue glutamate 271 is part of the active site. Residues histidine 274 and histidine 280 each coordinate Zn(2+). The interval 312 to 336 is disordered; it reads LYGGNPNGDGGGSKPSRESQSTGGD. Serine 337 carries the GPI-anchor amidated serine lipid modification. The propeptide at 338 to 360 is removed in mature form; it reads VRRWRGWMISLSSIATCIFLISV.

The protein belongs to the peptidase M10A family. Matrix metalloproteinases (MMPs) subfamily. Requires Zn(2+) as cofactor. In terms of tissue distribution, mostly expressed in leaves, roots and stems, and, to a lower extent, in flowers.

The protein resides in the cell membrane. Repressed by acetohydroxamic acid (AHA). In terms of biological role, matrix metalloproteinases (MMPs) or matrixins may play a role in the degradation and remodeling of the extracellular matrix (ECM) during development or in response to stresses. Active on Mca-KESAbuNLFVLKDpaR-NH(2) (QF75) and, to some extent, on McaPLGLDpaAR-NH(2) (QF24), myelin basic protein (MBP) and beta-casein. This chain is Metalloendoproteinase 5-MMP, found in Arabidopsis thaliana (Mouse-ear cress).